We begin with the raw amino-acid sequence, 706 residues long: Drebrin (706 aa).

The residue at position 2 (Ala-2) is an N-acetylalanine. Residues 3-134 (GVSFSGHRLE…DAGAIGQRLS (132 aa)) form the ADF-H domain. Residues Ser-141 and Ser-142 each carry the phosphoserine modification. Basic and acidic residues predominate over residues 209–236 (ERMEQERQEQEERERRYREREQQIEEHR). The segment at 209–497 (ERMEQERQEQ…AEPAASVTSV (289 aa)) is disordered. A Phosphoserine modification is found at Ser-241. The segment covering 288 to 298 (DNPREFFRQQE) has biased composition (basic and acidic residues). Positions 331–345 (SDSGPSSSSSSSSSP) are enriched in low complexity. Position 344 is a phosphoserine (Ser-344). Residues 357–366 (RTPNLSSSLP) are compositionally biased toward polar residues. 2 positions are modified to phosphothreonine: Thr-379 and Thr-383. A compositionally biased stretch (polar residues) spans 382–396 (PTRSPSDSSTASTPI). 3 positions are modified to phosphoserine: Ser-385, Ser-387, and Ser-393. Residue Thr-394 is modified to Phosphothreonine. A compositionally biased stretch (pro residues) spans 411–422 (QPPPPPPPPPPT). Positions 453–497 (AAEPPQAQEPPLLQSSPLEDSMCTESPEQAALAAPAEPAASVTSV) are enriched in low complexity. Position 468 is a phosphoserine (Ser-468). Position 550 is a phosphothreonine (Thr-550). The tract at residues 633 to 677 (EPHLLTNGETTQKEGTQASEGYFSQSQEEEFAQSEEPCAKVPPPV) is disordered. The span at 639–651 (NGETTQKEGTQAS) shows a compositional bias: polar residues. At Ser-658 the chain carries Phosphoserine.

In terms of assembly, interacts with RUFY3. Interacts with CXCR4; this interaction is enhanced by antigenic stimulation. Interacts (via ADF-H domain) with ZMYND8 (via N-terminus); the interaction leads to sequestering of ZMYND8 in the cytoplasm. Expressed in the hippocampus, with expression in the pyramidal cells of CA1, CA2 and CA3 and in the granule cells of the dentate gyrus (at protein level). Highly expressed in brain, also present in stomach and to a lesser degree in kidney, colon, and urinary bladder. The E2 isoform is specifically expressed in adult stomach, kidney, and cultured cells.

The protein resides in the cytoplasm. The protein localises to the cell projection. Its subcellular location is the dendrite. It localises to the cell cortex. It is found in the cell junction. The protein resides in the growth cone. Its function is as follows. Actin cytoskeleton-organizing protein that plays a role in the formation of cell projections. Required for actin polymerization at immunological synapses (IS) and for the recruitment of the chemokine receptor CXCR4 to IS. Plays a role in dendritic spine morphogenesis and organization, including the localization of the dopamine receptor DRD1 to the dendritic spines. Involved in memory-related synaptic plasticity in the hippocampus. The sequence is that of Drebrin (Dbn1) from Mus musculus (Mouse).